A 329-amino-acid chain; its full sequence is Phenylalanine--tRNA ligase alpha subunit (329 aa).

Residue E253 participates in Mg(2+) binding.

This sequence belongs to the class-II aminoacyl-tRNA synthetase family. Phe-tRNA synthetase alpha subunit type 1 subfamily. As to quaternary structure, tetramer of two alpha and two beta subunits. It depends on Mg(2+) as a cofactor.

It is found in the cytoplasm. The enzyme catalyses tRNA(Phe) + L-phenylalanine + ATP = L-phenylalanyl-tRNA(Phe) + AMP + diphosphate + H(+). In Coxiella burnetii (strain CbuK_Q154) (Coxiella burnetii (strain Q154)), this protein is Phenylalanine--tRNA ligase alpha subunit.